Consider the following 332-residue polypeptide: L-lactate dehydrogenase (332 aa).

NAD(+) is bound by residues 29–57 (GQVG…CADK) and arginine 99. The substrate site is built by arginine 106, asparagine 138, and arginine 169. Asparagine 138 provides a ligand contact to NAD(+). Catalysis depends on histidine 193, which acts as the Proton acceptor. Threonine 248 serves as a coordination point for substrate.

Belongs to the LDH/MDH superfamily. LDH family. As to quaternary structure, homotetramer.

The protein resides in the cytoplasm. It carries out the reaction (S)-lactate + NAD(+) = pyruvate + NADH + H(+). The protein operates within fermentation; pyruvate fermentation to lactate; (S)-lactate from pyruvate: step 1/1. The sequence is that of L-lactate dehydrogenase from Drosophila melanogaster (Fruit fly).